A 76-amino-acid polypeptide reads, in one-letter code: Conotoxin TsMLCL-03 (76 aa).

Positions 1–19 (MLCLPVFIILLLLASPAAP) are cleaved as a signal peptide. A propeptide spanning residues 20–44 (NPLERRIQSDLIRTALEDADMKTPK) is cleaved from the precursor.

Belongs to the conotoxin T superfamily. Post-translationally, contains 2 disulfide bonds that can be either 'C1-C3, C2-C4' or 'C1-C4, C2-C3', since these disulfide connectivities have been observed for conotoxins with cysteine framework V (for examples, see AC P0DQQ7 and AC P81755). In terms of tissue distribution, expressed by the venom duct.

Its subcellular location is the secreted. The protein is Conotoxin TsMLCL-03 of Conus tessulatus (Tessellate cone).